A 485-amino-acid polypeptide reads, in one-letter code: NADH-quinone oxidoreductase subunit N (485 aa).

14 helical membrane-spanning segments follow: residues 8-28 (LIAL…MLSI), 35-55 (FLNA…LWFV), 71-91 (GFAM…CTFA), 105-125 (FYLL…ANHL), 127-147 (SLFL…GYAF), 159-179 (YTIL…LVYA), 203-223 (LLAG…LVPF), 235-255 (PAPV…GVVM), 271-291 (VVLA…ALSQ), 297-317 (LLGY…IALQ), 326-346 (VGVY…VVSL), 373-393 (AAVM…LGFI), 408-430 (WWLV…RVAV), and 455-475 (IVVL…QPLI).

It belongs to the complex I subunit 2 family. As to quaternary structure, NDH-1 is composed of 13 different subunits. Subunits NuoA, H, J, K, L, M, N constitute the membrane sector of the complex.

The protein resides in the cell inner membrane. It carries out the reaction a quinone + NADH + 5 H(+)(in) = a quinol + NAD(+) + 4 H(+)(out). Functionally, NDH-1 shuttles electrons from NADH, via FMN and iron-sulfur (Fe-S) centers, to quinones in the respiratory chain. The immediate electron acceptor for the enzyme in this species is believed to be ubiquinone. Couples the redox reaction to proton translocation (for every two electrons transferred, four hydrogen ions are translocated across the cytoplasmic membrane), and thus conserves the redox energy in a proton gradient. The chain is NADH-quinone oxidoreductase subunit N from Escherichia coli O139:H28 (strain E24377A / ETEC).